Consider the following 333-residue polypeptide: Transcription factor MYB94 (333 aa).

2 consecutive HTH myb-type domains span residues 9–65 and 66–116; these read KIGV…RPGI and KRGN…KKKL. 2 consecutive DNA-binding regions (H-T-H motif) follow at residues 37 to 61 and 89 to 112; these read WRSV…TNYL and WAAI…NTHL. The span at 134 to 154 shows a compositional bias: polar residues; that stretch reads KDFSISNKNTTSHQSSNSSKG. Disordered stretches follow at residues 134 to 157 and 183 to 218; these read KDFS…GQWE and PTNF…YPSG. A compositionally biased stretch (low complexity) spans 196 to 209; that stretch reads SSSSSSTTTTTTTT.

Expressed in germinating seeds, rosette and cauline leaves, flower buds, open flowers, stems and developing siliques.

The protein resides in the nucleus. Functionally, transcription activator involved in the activation of cuticular wax biosynthesis under drought stress. Binds directly to the promoters of genes involved in cuticular wax biosynthesis. Transactivates WSD1, KCS2/DAISY, CER1, CER2, FAR3 and ECR genes. Functions together with MYB96 in the activation of cuticular wax biosynthesis. The chain is Transcription factor MYB94 from Arabidopsis thaliana (Mouse-ear cress).